We begin with the raw amino-acid sequence, 83 residues long: Putative membrane protein insertion efficiency factor (83 aa).

A disordered region spans residues 63–83; the sequence is GGNDPVPDHFSLRRNKTDISD. Residues 68 to 83 show a composition bias toward basic and acidic residues; sequence VPDHFSLRRNKTDISD.

This sequence belongs to the UPF0161 family.

It localises to the cell membrane. Could be involved in insertion of integral membrane proteins into the membrane. The sequence is that of Putative membrane protein insertion efficiency factor from Streptococcus agalactiae serotype III (strain NEM316).